The chain runs to 320 residues: MVTVVDRVTNRRLRHPEKAHRPDTSVQKKPDWIRVKAPTSPVYKETHGIVRTHKLVTVCEEAGCPNIGECWSQRHASFMILGEICTRACAFCNVATGIPLAVDDDEPERVADAVARMELKHVVITSVDRDDLADGGAEHFAKVIYAIRRKAPKTTIEVLTPDFRHKDGALEVVVAAKPDVFNHNLETVPSKYLKVRPGARYFHSIRLLQRVKELDPTIFTKSGIMVGLGEERNEILQLMDDLRTADVDFMTIGQYLQPTRKHHPVIRFVPPEEFESFAKIGKVKGFLHMASNPLTRSSHHAGDDFAILQKARDEKFALQR.

Positions 1-29 are disordered; the sequence is MVTVVDRVTNRRLRHPEKAHRPDTSVQKK. Basic and acidic residues predominate over residues 19–29; sequence AHRPDTSVQKK. [4Fe-4S] cluster-binding residues include Cys-59, Cys-64, Cys-70, Cys-85, Cys-89, Cys-92, and Ser-298. Residues 71 to 287 form the Radical SAM core domain; it reads WSQRHASFMI…AKIGKVKGFL (217 aa).

Belongs to the radical SAM superfamily. Lipoyl synthase family. [4Fe-4S] cluster serves as cofactor.

Its subcellular location is the cytoplasm. It catalyses the reaction [[Fe-S] cluster scaffold protein carrying a second [4Fe-4S](2+) cluster] + N(6)-octanoyl-L-lysyl-[protein] + 2 oxidized [2Fe-2S]-[ferredoxin] + 2 S-adenosyl-L-methionine + 4 H(+) = [[Fe-S] cluster scaffold protein] + N(6)-[(R)-dihydrolipoyl]-L-lysyl-[protein] + 4 Fe(3+) + 2 hydrogen sulfide + 2 5'-deoxyadenosine + 2 L-methionine + 2 reduced [2Fe-2S]-[ferredoxin]. It participates in protein modification; protein lipoylation via endogenous pathway; protein N(6)-(lipoyl)lysine from octanoyl-[acyl-carrier-protein]: step 2/2. Functionally, catalyzes the radical-mediated insertion of two sulfur atoms into the C-6 and C-8 positions of the octanoyl moiety bound to the lipoyl domains of lipoate-dependent enzymes, thereby converting the octanoylated domains into lipoylated derivatives. The protein is Lipoyl synthase of Bartonella tribocorum (strain CIP 105476 / IBS 506).